Consider the following 150-residue polypeptide: Lipoprotein signal peptidase (150 aa).

3 helical membrane passes run 8–28 (FYAL…LAHA), 58–78 (GFSW…GWFL), and 81–101 (TTGS…NVFD). Catalysis depends on residues Asp-116 and Asp-132. A helical membrane pass occupies residues 126 to 146 (VVFNIADLFILAGVFGTFLFL).

Belongs to the peptidase A8 family.

The protein localises to the cell membrane. The catalysed reaction is Release of signal peptides from bacterial membrane prolipoproteins. Hydrolyzes -Xaa-Yaa-Zaa-|-(S,diacylglyceryl)Cys-, in which Xaa is hydrophobic (preferably Leu), and Yaa (Ala or Ser) and Zaa (Gly or Ala) have small, neutral side chains.. It participates in protein modification; lipoprotein biosynthesis (signal peptide cleavage). In terms of biological role, this protein specifically catalyzes the removal of signal peptides from prolipoproteins. The protein is Lipoprotein signal peptidase of Tropheryma whipplei (strain Twist) (Whipple's bacillus).